The primary structure comprises 608 residues: Chaperone protein DnaK (608 aa).

Thr175 is subject to Phosphothreonine; by autocatalysis.

This sequence belongs to the heat shock protein 70 family.

Functionally, acts as a chaperone. The protein is Chaperone protein DnaK of Finegoldia magna (strain ATCC 29328 / DSM 20472 / WAL 2508) (Peptostreptococcus magnus).